The following is a 23-amino-acid chain: NADP phosphatase 2 (23 aa).

In terms of assembly, homodimer.

It is found in the cytoplasm. In Arthrobacter sp. (strain KM), this protein is NADP phosphatase 2.